The primary structure comprises 466 residues: 3-isopropylmalate dehydratase large subunit (466 aa).

[4Fe-4S] cluster is bound by residues Cys347, Cys407, and Cys410.

The protein belongs to the aconitase/IPM isomerase family. LeuC type 1 subfamily. As to quaternary structure, heterodimer of LeuC and LeuD. Requires [4Fe-4S] cluster as cofactor.

It catalyses the reaction (2R,3S)-3-isopropylmalate = (2S)-2-isopropylmalate. It participates in amino-acid biosynthesis; L-leucine biosynthesis; L-leucine from 3-methyl-2-oxobutanoate: step 2/4. Its function is as follows. Catalyzes the isomerization between 2-isopropylmalate and 3-isopropylmalate, via the formation of 2-isopropylmaleate. This chain is 3-isopropylmalate dehydratase large subunit, found in Escherichia coli (strain 55989 / EAEC).